The sequence spans 508 residues: Photosystem II CP47 reaction center protein (508 aa).

Helical transmembrane passes span Ser-21–Ser-36, Ile-101–Trp-115, Gly-140–Phe-156, Ile-203–Ser-218, Val-237–Val-252, and Ser-457–Arg-472.

This sequence belongs to the PsbB/PsbC family. PsbB subfamily. In terms of assembly, PSII is composed of 1 copy each of membrane proteins PsbA, PsbB, PsbC, PsbD, PsbE, PsbF, PsbH, PsbI, PsbJ, PsbK, PsbL, PsbM, PsbT, PsbX, PsbY, PsbZ, Psb30/Ycf12, at least 3 peripheral proteins of the oxygen-evolving complex and a large number of cofactors. It forms dimeric complexes. Binds multiple chlorophylls. PSII binds additional chlorophylls, carotenoids and specific lipids. is required as a cofactor.

The protein localises to the plastid. It localises to the chloroplast thylakoid membrane. Its function is as follows. One of the components of the core complex of photosystem II (PSII). It binds chlorophyll and helps catalyze the primary light-induced photochemical processes of PSII. PSII is a light-driven water:plastoquinone oxidoreductase, using light energy to abstract electrons from H(2)O, generating O(2) and a proton gradient subsequently used for ATP formation. The chain is Photosystem II CP47 reaction center protein from Dioscorea elephantipes (Elephant's foot yam).